We begin with the raw amino-acid sequence, 346 residues long: Senescence-specific cysteine protease SAG12 (346 aa).

The N-terminal stretch at 1 to 25 (MALKHMQIFLFVAIFSSFCFSITLS) is a signal peptide. N-linked (GlcNAc...) asparagine glycosylation is present at asparagine 124. Disulfide bonds link cysteine 151–cysteine 192, cysteine 185–cysteine 225, and cysteine 283–cysteine 335. The active site involves cysteine 154. Histidine 289 is an active-site residue. Residue asparagine 301 is glycosylated (N-linked (GlcNAc...) asparagine). Residue asparagine 310 is part of the active site.

This sequence belongs to the peptidase C1 family. Found in senescent leaves, especially in senescence-associated vacuoles- (SAVs) containing cells (e.g. mesophyll and guard cells), and in senescencing ovules of unfertilised pistils.

The protein resides in the vacuole. Cysteine protease that may have a developmental senescence specific cell death function during apoptosis, heavy metal detoxification, and hypersensitive response. This is Senescence-specific cysteine protease SAG12 from Arabidopsis thaliana (Mouse-ear cress).